A 491-amino-acid chain; its full sequence is Cytosol aminopeptidase (491 aa).

Residues lysine 263 and aspartate 268 each contribute to the Mn(2+) site. Residue lysine 275 is part of the active site. Positions 286, 345, and 347 each coordinate Mn(2+). Arginine 349 is a catalytic residue.

It belongs to the peptidase M17 family. The cofactor is Mn(2+).

The protein localises to the cytoplasm. The enzyme catalyses Release of an N-terminal amino acid, Xaa-|-Yaa-, in which Xaa is preferably Leu, but may be other amino acids including Pro although not Arg or Lys, and Yaa may be Pro. Amino acid amides and methyl esters are also readily hydrolyzed, but rates on arylamides are exceedingly low.. It catalyses the reaction Release of an N-terminal amino acid, preferentially leucine, but not glutamic or aspartic acids.. Functionally, presumably involved in the processing and regular turnover of intracellular proteins. Catalyzes the removal of unsubstituted N-terminal amino acids from various peptides. This Haemophilus influenzae (strain ATCC 51907 / DSM 11121 / KW20 / Rd) protein is Cytosol aminopeptidase (pepA).